The primary structure comprises 78 residues: Acyl carrier protein (78 aa).

The 76-residue stretch at 2-77 folds into the Carrier domain; sequence SNIEQQVKKI…LAIDYINAHN (76 aa). Position 37 is an O-(pantetheine 4'-phosphoryl)serine (serine 37).

This sequence belongs to the acyl carrier protein (ACP) family. In terms of processing, 4'-phosphopantetheine is transferred from CoA to a specific serine of apo-ACP by AcpS. This modification is essential for activity because fatty acids are bound in thioester linkage to the sulfhydryl of the prosthetic group.

Its subcellular location is the cytoplasm. Its pathway is lipid metabolism; fatty acid biosynthesis. Functionally, carrier of the growing fatty acid chain in fatty acid biosynthesis. The polypeptide is Acyl carrier protein (Neisseria meningitidis serogroup C / serotype 2a (strain ATCC 700532 / DSM 15464 / FAM18)).